We begin with the raw amino-acid sequence, 138 residues long: Superoxide dismutase [Mn] (138 aa).

Mn(2+)-binding residues include H1, H49, D133, and H137.

This sequence belongs to the iron/manganese superoxide dismutase family. It depends on Mn(2+) as a cofactor.

It catalyses the reaction 2 superoxide + 2 H(+) = H2O2 + O2. Functionally, destroys superoxide anion radicals which are normally produced within the cells and which are toxic to biological systems. This is Superoxide dismutase [Mn] (sodA) from Mycobacterium malmoense.